Consider the following 95-residue polypeptide: Small ribosomal subunit protein uS17 (95 aa).

It belongs to the universal ribosomal protein uS17 family. In terms of assembly, part of the 30S ribosomal subunit.

In terms of biological role, one of the primary rRNA binding proteins, it binds specifically to the 5'-end of 16S ribosomal RNA. The sequence is that of Small ribosomal subunit protein uS17 from Mesomycoplasma hyopneumoniae (strain 7448) (Mycoplasma hyopneumoniae).